The sequence spans 892 residues: Protein FAM193B (892 aa).

Disordered stretches follow at residues 1–78, 164–192, 237–321, and 379–403; these read MTRR…TSSQ, SCGG…NSGD, EHHQ…PLLK, and DEGL…THPR. Residues 28–37 are compositionally biased toward pro residues; the sequence is APEPQPPPPS. Basic and acidic residues predominate over residues 56-65; sequence DGPREEEEPK. A compositionally biased stretch (low complexity) spans 169–185; that stretch reads SHSSSSSSSSSSSSSSS. Pro residues-rich tracts occupy residues 248–258, 274–285, and 309–321; these read PNSPTGPPPHP, YPPPLPTTPVAP, and SPHP…PLLK. Over residues 379–388 the composition is skewed to acidic residues; sequence DEGLGEEEDS. Over residues 391–400 the composition is skewed to low complexity; it reads ERSSCTSSST. Residues 485–517 adopt a coiled-coil conformation; the sequence is NSARAAKRARHKLKKKEKEKARLATEALKQVNR. Polar residues-rich tracts occupy residues 587–597 and 610–621; these read LTPSDLSGSSQ and TLGSPQSHTLQA. 2 disordered regions span residues 587–655 and 671–837; these read LTPS…ENGL and VKTP…SLDD. Residues 637-650 show a composition bias toward pro residues; it reads PPPWTEVRGPPPGI. A compositionally biased stretch (low complexity) spans 736 to 757; sequence KSQVSSPKQPSKGSEPAKVGSG. 3 positions are modified to phosphoserine: Ser764, Ser776, and Ser882.

Belongs to the FAM193 family.

It localises to the cytoplasm. It is found in the nucleus. This chain is Protein FAM193B (Fam193b), found in Mus musculus (Mouse).